A 168-amino-acid chain; its full sequence is Plastocyanin A, chloroplastic (168 aa).

A chloroplast-targeting transit peptide spans 1–69 (MATVTSAAVS…SAMIASNAMA (69 aa)). In terms of domain architecture, Plastocyanin-like spans 70–168 (IDVLLGADDG…AGMVGKVTVN (99 aa)). Cu cation-binding residues include His-106, Cys-153, His-156, and Met-161.

Belongs to the plastocyanin family. Cu(2+) is required as a cofactor.

It localises to the plastid. The protein resides in the chloroplast thylakoid membrane. In terms of biological role, participates in electron transfer between P700 and the cytochrome b6-f complex in photosystem I. The sequence is that of Plastocyanin A, chloroplastic (PETE) from Populus nigra (Lombardy poplar).